Consider the following 344-residue polypeptide: Putative 2-hydroxyacid dehydrogenase YoaD (344 aa).

Aspartate 193 contacts NAD(+). Arginine 251 is an active-site residue. An NAD(+)-binding site is contributed by aspartate 275. Glutamate 280 is a catalytic residue. Histidine 300 acts as the Proton donor in catalysis.

The protein belongs to the D-isomer specific 2-hydroxyacid dehydrogenase family.

This Bacillus subtilis (strain 168) protein is Putative 2-hydroxyacid dehydrogenase YoaD (yoaD).